The following is a 232-amino-acid chain: Small ribosomal subunit protein uS3 (232 aa).

Residues 39–107 enclose the KH type-2 domain; it reads IRAFLKKKLY…EVNVNIKEER (69 aa). The tract at residues 212–232 is disordered; that stretch reads VQPEKTEDDAPKKTRRPRRGK. Basic and acidic residues predominate over residues 213–223; sequence QPEKTEDDAPK.

This sequence belongs to the universal ribosomal protein uS3 family. In terms of assembly, part of the 30S ribosomal subunit. Forms a tight complex with proteins S10 and S14.

Functionally, binds the lower part of the 30S subunit head. Binds mRNA in the 70S ribosome, positioning it for translation. The protein is Small ribosomal subunit protein uS3 of Campylobacter curvus (strain 525.92).